The sequence spans 192 residues: ER membrane protein complex subunit 8/9 homolog (192 aa).

The region spanning 5-135 (ISITTEALSK…LVSIDKVGSD (131 aa)) is the MPN domain.

It belongs to the EMC8/EMC9 family.

The sequence is that of ER membrane protein complex subunit 8/9 homolog from Dictyostelium discoideum (Social amoeba).